A 359-amino-acid polypeptide reads, in one-letter code: Ni-sirohydrochlorin a,c-diamide reductive cyclase complex, component CfbD (359 aa).

Belongs to the NifD/NifK/NifE/NifN family. Homodimer or monomer. The Ni-sirohydrochlorin a,c-diamide reductive cyclase complex is composed of a NifH homolog component CfbC and a NifD homolog component CfbD. Requires [4Fe-4S] cluster as cofactor.

It catalyses the reaction Ni-sirohydrochlorin a,c-diamide + 3 AH2 + ATP + H2O = 15,17(3)-seco-F430-17(3)-acid + 3 A + ADP + phosphate. In terms of biological role, involved in the biosynthesis of the unique nickel-containing tetrapyrrole coenzyme F430, the prosthetic group of methyl-coenzyme M reductase (MCR), which plays a key role in methanogenesis and anaerobic methane oxidation. Catalyzes both the six-electron reduction of the tetrahydroporphyrin ring system and the gamma-lactamization of the c-acetamide side chain of Ni-sirohydrochlorin a,c-diamide to yield 15,17(3)-seco-F430-17(3)-acid (seco-F430), the last intermediate in the biosynthesis of the coenzyme F430. The sequence is that of Ni-sirohydrochlorin a,c-diamide reductive cyclase complex, component CfbD from Methanothermobacter thermautotrophicus (strain ATCC 29096 / DSM 1053 / JCM 10044 / NBRC 100330 / Delta H) (Methanobacterium thermoautotrophicum).